The sequence spans 247 residues: Type III pantothenate kinase (247 aa).

7–14 (AIGNSRWH) is an ATP binding site. Substrate contacts are provided by residues Tyr-91 and 95-98 (GLDR). Asp-97 serves as the catalytic Proton acceptor. Asp-117 contributes to the K(+) binding site. Residue Thr-120 participates in ATP binding.

It belongs to the type III pantothenate kinase family. In terms of assembly, homodimer. NH4(+) is required as a cofactor. K(+) serves as cofactor.

The protein resides in the cytoplasm. It carries out the reaction (R)-pantothenate + ATP = (R)-4'-phosphopantothenate + ADP + H(+). Its pathway is cofactor biosynthesis; coenzyme A biosynthesis; CoA from (R)-pantothenate: step 1/5. Functionally, catalyzes the phosphorylation of pantothenate (Pan), the first step in CoA biosynthesis. The chain is Type III pantothenate kinase from Synechococcus sp. (strain ATCC 27144 / PCC 6301 / SAUG 1402/1) (Anacystis nidulans).